We begin with the raw amino-acid sequence, 269 residues long: Mitochondrial distribution and morphology protein 12 (269 aa).

The region spanning 1-269 (MSLEVNWEQI…WPNWIEFQGV (269 aa)) is the SMP-LTD domain. The tract at residues 72-119 (ERAGTGEGDEDDGRVAPTSTPMKHQTSGSSDQTDASNPISPSTSHDHE) is disordered. The span at 88 to 114 (PTSTPMKHQTSGSSDQTDASNPISPST) shows a compositional bias: polar residues.

The protein belongs to the MDM12 family. Component of the ER-mitochondria encounter structure (ERMES) or MDM complex, composed of MMM1, MDM10, MDM12 and MDM34. An MMM1 homodimer associates with one molecule of MDM12 on each side in a pairwise head-to-tail manner, and the SMP-LTD domains of MMM1 and MDM12 generate a continuous hydrophobic tunnel for phospholipid trafficking.

It localises to the mitochondrion outer membrane. Its subcellular location is the endoplasmic reticulum membrane. Component of the ERMES/MDM complex, which serves as a molecular tether to connect the endoplasmic reticulum (ER) and mitochondria. Components of this complex are involved in the control of mitochondrial shape and protein biogenesis, and function in nonvesicular lipid trafficking between the ER and mitochondria. MDM12 is required for the interaction of the ER-resident membrane protein MMM1 and the outer mitochondrial membrane-resident beta-barrel protein MDM10. The MDM12-MMM1 subcomplex functions in the major beta-barrel assembly pathway that is responsible for biogenesis of all mitochondrial outer membrane beta-barrel proteins, and acts in a late step after the SAM complex. The MDM10-MDM12-MMM1 subcomplex further acts in the TOM40-specific pathway after the action of the MDM12-MMM1 complex. Essential for establishing and maintaining the structure of mitochondria and maintenance of mtDNA nucleoids. The protein is Mitochondrial distribution and morphology protein 12 of Komagataella phaffii (strain GS115 / ATCC 20864) (Yeast).